The following is a 288-amino-acid chain: Sulfur carrier protein FdhD (288 aa).

The active-site Cysteine persulfide intermediate is the Cys-122. 268–273 (FVRGER) contacts Mo-bis(molybdopterin guanine dinucleotide).

The protein belongs to the FdhD family.

The protein localises to the cytoplasm. Its function is as follows. Required for formate dehydrogenase (FDH) activity. Acts as a sulfur carrier protein that transfers sulfur from IscS to the molybdenum cofactor prior to its insertion into FDH. This Anaeromyxobacter dehalogenans (strain 2CP-C) protein is Sulfur carrier protein FdhD.